A 691-amino-acid polypeptide reads, in one-letter code: MKRTILSLLAAVSLAIPVYAAGYSDGNPTQQTSQSSMMTPEMLLTMARIGGFSLSPNGKQVVYSVSLPSIQDNKAKTQLFFVNSDGSGRKALTDGTRTAVSPRWIEDGKRIAYLTVIEGEMQLVSILPDGTDQRQVTRIPGGITGYLYSQDGKQLVYTADIKLPNEAKDRNPDLDKISGRVITDLMYKHWDEWVETAPHTFVASLAQQPITQGKDLLEGELFEAPMKPHSDESDIAITPDGKGIAYASRKKTGLEYSISTNSDIYYYDLTTGTTTNLTEGMMGYDTHPSFSPDGKYMTWCSMERDGYESDLIRLFLLDRTTGEKTYLTEGFEYNVEQPTWSQDGKSIYFIACVEAESHLYELTLKNKKIRRITQGQMDYVGFDLQGTTLVAARQSMLAPTDLYRIDLKKGTATAITKENESTLAQLGDIRCEKRWMNTTNGEKMLVWVLYPANFDASKKYPSILYCQGGPQSTISQFWSYRWNPRIMAENGYIVILPNRHGVPGFGKAWNEQISGDYGGQNMRDYLTAADEMKKESYIDPNGMGCVGASYGGFSVYWLAGHHEKRFNCFIAHAGIFNLEAQYLETEEKWFANWDMGGAPWEKSNATAQRTFATSPHLFVDKWDTPILIIHGERDYRILASQGMMAFDAARMHGVPTEMLLYPDENHWVLQPQNAVLWQRTFFRWLDRWLKK.

An N-terminal signal peptide occupies residues 1-20 (MKRTILSLLAAVSLAIPVYA). Residues Ser549, Asp634, and His666 each act as charge relay system in the active site.

This sequence belongs to the peptidase S9C family. As to quaternary structure, homodimer.

The protein resides in the periplasm. Catalyzes the removal of dipeptides from the N-terminus of oligopeptides. Prefers Ala and hydrophobic residues at the P1 position, and has no preference for P2 residues. Shows the highest dipeptidyl peptidase activity toward the synthetic substrate Lys-Ala-methylcoumaryl-7-amide (Lys-Ala-MCA). Is likely involved in amino acid metabolism and bacterial growth/survival of asaccharolytic P.endodontalis, that utilizes amino acids from extracellular proteinaceous nutrients as energy and carbon sources. The chain is Dipeptidyl-peptidase 5 from Porphyromonas endodontalis (strain ATCC 35406 / DSM 24491 / JCM 8526 / CCUG 16442 / BCRC 14492 / NCTC 13058 / HG 370) (Bacteroides endodontalis).